We begin with the raw amino-acid sequence, 520 residues long: Cytochrome P450 72A68 (520 aa).

A helical transmembrane segment spans residues 11-31 (IILITVTFGLVYAWRVLNWMW). C466 contributes to the heme binding site.

The protein belongs to the cytochrome P450 family. It depends on heme as a cofactor.

Its subcellular location is the membrane. It catalyses the reaction oleanolate + 3 reduced [NADPH--hemoprotein reductase] + 3 O2 = gypsogenate + 3 oxidized [NADPH--hemoprotein reductase] + 4 H2O + 4 H(+). In terms of biological role, catalyzes the carboxylation of oleanolic acid at the C-23 position to form gypsogenic acid. Involved in the hemolytic saponin biosynthetic pathway. The chain is Cytochrome P450 72A68 from Medicago truncatula (Barrel medic).